Consider the following 257-residue polypeptide: uncharacterized protein (257 aa).

2 disordered regions span residues 1 to 164 and 225 to 257; these read MERS…AGAC and TAWS…RARA. The span at 10–28 shows a compositional bias: basic and acidic residues; sequence CGEEPRSGSRRLPKAEGDK. Over residues 54–65 the composition is skewed to basic residues; sequence RPNRASGRRRRS. Positions 125-139 are enriched in pro residues; it reads RPTPRPCAGPAPPPA. Residues 144-162 show a composition bias toward basic residues; the sequence is RCRRPRRWPRAGRRGRRAG.

This is an uncharacterized protein from Homo sapiens (Human).